Reading from the N-terminus, the 290-residue chain is tRNA dimethylallyltransferase (290 aa).

11–18 contributes to the ATP binding site; sequence GPTASGKS. 13–18 is a substrate binding site; the sequence is TASGKS. Interaction with substrate tRNA regions lie at residues 36–39 and 158–162; these read DSMQ and QRIVR.

Belongs to the IPP transferase family. In terms of assembly, monomer. It depends on Mg(2+) as a cofactor.

It catalyses the reaction adenosine(37) in tRNA + dimethylallyl diphosphate = N(6)-dimethylallyladenosine(37) in tRNA + diphosphate. Functionally, catalyzes the transfer of a dimethylallyl group onto the adenine at position 37 in tRNAs that read codons beginning with uridine, leading to the formation of N6-(dimethylallyl)adenosine (i(6)A). This Bartonella tribocorum (strain CIP 105476 / IBS 506) protein is tRNA dimethylallyltransferase.